A 128-amino-acid polypeptide reads, in one-letter code: Probable 4-amino-4-deoxy-L-arabinose-phosphoundecaprenol flippase subunit ArnF (128 aa).

Residues 1–2 (MG) lie on the Cytoplasmic side of the membrane. Residues 3–23 (LIWGLFSVIIASVAQLSLGFA) traverse the membrane as a helical segment. The Periplasmic segment spans residues 24–35 (ASHLPPMTHLWD). A helical membrane pass occupies residues 36 to 56 (FIAALLAFGLDARILLLGLLG). The Cytoplasmic portion of the chain corresponds to 57-75 (YLLSVFCWYKTLHKLALSK). A helical transmembrane segment spans residues 76-96 (AYALLSMSYVLVWIASMVLPG). The Periplasmic portion of the chain corresponds to 97-100 (REGT). Residues 101-121 (FSLKALLGVACIMSGLMLIFL) form a helical membrane-spanning segment. Topologically, residues 122–128 (PTTKQRY) are cytoplasmic.

It belongs to the ArnF family. Heterodimer of ArnE and ArnF.

The protein resides in the cell inner membrane. It functions in the pathway bacterial outer membrane biogenesis; lipopolysaccharide biosynthesis. In terms of biological role, translocates 4-amino-4-deoxy-L-arabinose-phosphoundecaprenol (alpha-L-Ara4N-phosphoundecaprenol) from the cytoplasmic to the periplasmic side of the inner membrane. The chain is Probable 4-amino-4-deoxy-L-arabinose-phosphoundecaprenol flippase subunit ArnF from Shigella flexneri serotype 5b (strain 8401).